The chain runs to 348 residues: uncharacterized protein (348 aa).

This is an uncharacterized protein from Geobacillus kaustophilus (strain HTA426).